A 573-amino-acid chain; its full sequence is Urease subunit alpha 2 (573 aa).

The Urease domain maps to 136-573 (GAIDAHVHLI…LPMAQRYFLF (438 aa)). Ni(2+) contacts are provided by His-141, His-143, and Lys-224. Lys-224 is subject to N6-carboxylysine. Residue His-226 coordinates substrate. Residues His-253 and His-279 each coordinate Ni(2+). Residue His-327 is the Proton donor of the active site. Residue Asp-367 participates in Ni(2+) binding.

This sequence belongs to the metallo-dependent hydrolases superfamily. Urease alpha subunit family. As to quaternary structure, may form a heterohexamer of 3 UreC (alpha) and 3 UreAB (gamma/beta) subunits. May also form a heterotrimer of UreA (gamma), UreB (beta) and UreC (alpha) subunits. Three heterotrimers associate to form the active enzyme. Ni cation serves as cofactor. Carboxylation allows a single lysine to coordinate two nickel ions.

It localises to the cytoplasm. It catalyses the reaction urea + 2 H2O + H(+) = hydrogencarbonate + 2 NH4(+). The protein operates within nitrogen metabolism; urea degradation; CO(2) and NH(3) from urea (urease route): step 1/1. The chain is Urease subunit alpha 2 from Streptomyces avermitilis (strain ATCC 31267 / DSM 46492 / JCM 5070 / NBRC 14893 / NCIMB 12804 / NRRL 8165 / MA-4680).